The primary structure comprises 165 residues: Protein C2-DOMAIN ABA-RELATED 7 (165 aa).

Met1 is modified (N-acetylmethionine). One can recognise a C2 domain in the interval 1-106 (MEELVGLLRI…HKMGLQELPD (106 aa)). 7 residues coordinate Ca(2+): Arg21, Asp22, Asp27, Asp73, Lys74, Asp75, and Asp81.

Belongs to the plant CAR protein family. In terms of assembly, binds to PYR/PYL/RCAR abscisic acid intracellular receptors in an ABA-independent manner, both at the plasma membrane and in the nucleus.

It is found in the cell membrane. The protein localises to the nucleus. Its function is as follows. Stimulates the GTPase/ATPase activities of Obg-like ATPases. Mediates the transient calcium-dependent interaction of PYR/PYL/RCAR abscisic acid (ABA) receptors with the plasma membrane and thus regulates ABA sensitivity. The polypeptide is Protein C2-DOMAIN ABA-RELATED 7 (Arabidopsis thaliana (Mouse-ear cress)).